The following is a 277-amino-acid chain: Urease accessory protein UreD (277 aa).

Belongs to the UreD family. UreD, UreF and UreG form a complex that acts as a GTP-hydrolysis-dependent molecular chaperone, activating the urease apoprotein by helping to assemble the nickel containing metallocenter of UreC. The UreE protein probably delivers the nickel.

The protein localises to the cytoplasm. Functionally, required for maturation of urease via the functional incorporation of the urease nickel metallocenter. The sequence is that of Urease accessory protein UreD from Flavobacterium johnsoniae (strain ATCC 17061 / DSM 2064 / JCM 8514 / BCRC 14874 / CCUG 350202 / NBRC 14942 / NCIMB 11054 / UW101) (Cytophaga johnsonae).